Reading from the N-terminus, the 308-residue chain is Type II restriction enzyme MamI (308 aa).

It catalyses the reaction Endonucleolytic cleavage of DNA to give specific double-stranded fragments with terminal 5'-phosphates.. In terms of biological role, a P subtype restriction enzyme that recognizes the double-stranded sequence 5'-GATNNNNATC-3' and cleaves after N-5. The chain is Type II restriction enzyme MamI from Microbacterium ammoniaphilum.